We begin with the raw amino-acid sequence, 354 residues long: MIDWITSQGQGVLGAYWTPLWILIRAVIIVVPLLLCVAYLILWERKLIGWMHVRIGPNRVGPLGLLQPIADVLKLLLKEVMMPTQVSRGMYLIAPLMVLMPAVAIWAVIPFQAEVVMADVNAGLLYVMAISSVGVYGVILAGWASNSKYAFIGAMRAAAQMVSYEIAMGFALVTVLMVAGSLNLSAIVNGQNTGYFADMGINILSWNWLPLLPMFGVYFISGVAETNRHPFDVVEGESEIVAGHMIEYSGMGFALFFLAEYINMIIISTMTALMFLGGWAPPFESVVTNAIPGFFWLLIKVFLLLSVFIWIRASFPRYRYDQIMRLGWKVFIPLTVAWLIIVAIWIKSPWNIWH.

Helical transmembrane passes span 22 to 42 (ILIR…YLIL), 91 to 111 (YLIA…VIPF), 124 to 144 (LLYV…AGWA), 168 to 188 (MGFA…SAIV), 203 to 223 (ILSW…ISGV), 255 to 275 (LFFL…ALMF), 291 to 311 (IPGF…FIWI), and 326 to 346 (LGWK…AIWI).

Belongs to the complex I subunit 1 family. In terms of assembly, NDH-1 is composed of 14 different subunits. Subunits NuoA, H, J, K, L, M, N constitute the membrane sector of the complex.

It localises to the cell inner membrane. It catalyses the reaction a quinone + NADH + 5 H(+)(in) = a quinol + NAD(+) + 4 H(+)(out). NDH-1 shuttles electrons from NADH, via FMN and iron-sulfur (Fe-S) centers, to quinones in the respiratory chain. The immediate electron acceptor for the enzyme in this species is believed to be ubiquinone. Couples the redox reaction to proton translocation (for every two electrons transferred, four hydrogen ions are translocated across the cytoplasmic membrane), and thus conserves the redox energy in a proton gradient. This subunit may bind ubiquinone. The polypeptide is NADH-quinone oxidoreductase subunit H (Cupriavidus taiwanensis (strain DSM 17343 / BCRC 17206 / CCUG 44338 / CIP 107171 / LMG 19424 / R1) (Ralstonia taiwanensis (strain LMG 19424))).